A 183-amino-acid polypeptide reads, in one-letter code: NAD(P)H-quinone oxidoreductase subunit I, chloroplastic (183 aa).

4Fe-4S ferredoxin-type domains lie at 55-84 (GRIH…VDWE) and 95-124 (TSYS…MTEE). [4Fe-4S] cluster is bound by residues C64, C67, C70, C74, C104, C107, C110, and C114.

It belongs to the complex I 23 kDa subunit family. In terms of assembly, NDH is composed of at least 16 different subunits, 5 of which are encoded in the nucleus. It depends on [4Fe-4S] cluster as a cofactor.

It localises to the plastid. The protein resides in the chloroplast thylakoid membrane. It carries out the reaction a plastoquinone + NADH + (n+1) H(+)(in) = a plastoquinol + NAD(+) + n H(+)(out). The catalysed reaction is a plastoquinone + NADPH + (n+1) H(+)(in) = a plastoquinol + NADP(+) + n H(+)(out). In terms of biological role, NDH shuttles electrons from NAD(P)H:plastoquinone, via FMN and iron-sulfur (Fe-S) centers, to quinones in the photosynthetic chain and possibly in a chloroplast respiratory chain. The immediate electron acceptor for the enzyme in this species is believed to be plastoquinone. Couples the redox reaction to proton translocation, and thus conserves the redox energy in a proton gradient. The protein is NAD(P)H-quinone oxidoreductase subunit I, chloroplastic of Huperzia lucidula (Shining clubmoss).